The sequence spans 559 residues: Sesquiterpene synthase (559 aa).

Mg(2+) is bound by residues aspartate 312, aspartate 316, and glutamate 464. Residues 312–316 carry the DDXXD motif motif; the sequence is DDIYD.

Belongs to the terpene synthase family. Tpsa subfamily. It depends on Mg(2+) as a cofactor. Mn(2+) is required as a cofactor.

Its function is as follows. Catalyzes alpha-humulene and delta-cadinene, as well as beta-elemene, the thermal rearrangement product of germacrene A and several other bicyclic sesquiterpenes when incubated with (2E,6E)-farnesyl diphosphate. The sequence is that of Sesquiterpene synthase from Santalum austrocaledonicum (Sandalwood).